The sequence spans 433 residues: Probable carboxypeptidase ATEG_02905 (433 aa).

The N-terminal stretch at 1–18 (MKSAISLLLASAATYVGA) is a signal peptide. The tract at residues 20–40 (PHPEPPQLVLSPSTSTGVHGD) is disordered. N-linked (GlcNAc...) asparagine glycosylation occurs at asparagine 92. Aspartate 161 is a binding site for Zn(2+). Glutamate 193 serves as the catalytic Proton acceptor. Glutamate 194 lines the Zn(2+) pocket.

It belongs to the peptidase M20A family. Requires Zn(2+) as cofactor.

The protein resides in the secreted. The chain is Probable carboxypeptidase ATEG_02905 from Aspergillus terreus (strain NIH 2624 / FGSC A1156).